We begin with the raw amino-acid sequence, 293 residues long: 4-diphosphocytidyl-2-C-methyl-D-erythritol kinase (293 aa).

Residue K16 is part of the active site. 99–109 contributes to the ATP binding site; the sequence is PMGAGLGGGSS. D141 is an active-site residue.

It belongs to the GHMP kinase family. IspE subfamily.

The enzyme catalyses 4-CDP-2-C-methyl-D-erythritol + ATP = 4-CDP-2-C-methyl-D-erythritol 2-phosphate + ADP + H(+). Its pathway is isoprenoid biosynthesis; isopentenyl diphosphate biosynthesis via DXP pathway; isopentenyl diphosphate from 1-deoxy-D-xylulose 5-phosphate: step 3/6. Catalyzes the phosphorylation of the position 2 hydroxy group of 4-diphosphocytidyl-2C-methyl-D-erythritol. The polypeptide is 4-diphosphocytidyl-2-C-methyl-D-erythritol kinase (Burkholderia cenocepacia (strain ATCC BAA-245 / DSM 16553 / LMG 16656 / NCTC 13227 / J2315 / CF5610) (Burkholderia cepacia (strain J2315))).